The sequence spans 388 residues: Chorismate synthase (388 aa).

Positions 39 and 45 each coordinate NADP(+). FMN is bound by residues 132–134 (RSS), 251–252 (NA), Gly-296, 311–315 (KPIPT), and Arg-337.

The protein belongs to the chorismate synthase family. As to quaternary structure, homotetramer. FMNH2 serves as cofactor.

The enzyme catalyses 5-O-(1-carboxyvinyl)-3-phosphoshikimate = chorismate + phosphate. It functions in the pathway metabolic intermediate biosynthesis; chorismate biosynthesis; chorismate from D-erythrose 4-phosphate and phosphoenolpyruvate: step 7/7. Its function is as follows. Catalyzes the anti-1,4-elimination of the C-3 phosphate and the C-6 proR hydrogen from 5-enolpyruvylshikimate-3-phosphate (EPSP) to yield chorismate, which is the branch point compound that serves as the starting substrate for the three terminal pathways of aromatic amino acid biosynthesis. This reaction introduces a second double bond into the aromatic ring system. The polypeptide is Chorismate synthase (Staphylococcus haemolyticus (strain JCSC1435)).